The sequence spans 147 residues: Large ribosomal subunit protein bL9 (147 aa).

This sequence belongs to the bacterial ribosomal protein bL9 family.

Binds to the 23S rRNA. The polypeptide is Large ribosomal subunit protein bL9 (Helicobacter hepaticus (strain ATCC 51449 / 3B1)).